Here is a 526-residue protein sequence, read N- to C-terminus: Phenylacetaldehyde oxime monooxygenase CYP71AN24 (526 aa).

A helical transmembrane segment spans residues 22-42 (SFNIFLVPILCLSIFILFSLT). Cys465 is a heme binding site.

Belongs to the cytochrome P450 family. It depends on heme as a cofactor. In terms of tissue distribution, expressed in seedlings and leaves.

The protein resides in the membrane. The catalysed reaction is (E)-phenylacetaldehyde oxime + reduced [NADPH--hemoprotein reductase] + O2 = (R)-mandelonitrile + oxidized [NADPH--hemoprotein reductase] + 2 H2O + H(+). It catalyses the reaction phenylacetonitrile + reduced [NADPH--hemoprotein reductase] + O2 = (R)-mandelonitrile + oxidized [NADPH--hemoprotein reductase] + H2O + H(+). In terms of biological role, involved in L-phenylalanine-derived cyanogenic glycoside biosynthesis, including prunasin and amygdalin defensive agents. Catalyzes the conversion of phenylacetaldoxime (PAOx) and phenylacetonitrile (PAN) into mandelonitrile (MAN). To a lower extent, can convert various aromatic aldoximes and nitriles; mediates the transformation of 4-hydroxyphenylacetaldoxime, 4-hydroxyphenylacetonitrile, indole-3-acetal-doxime and indole-3-acetonitrile into the corresponding hydroxynitriles, but cannot use the aliphatic compounds 2-methylpropanaloxime and 2-methylpropanenitrile as substrates. The sequence is that of Phenylacetaldehyde oxime monooxygenase CYP71AN24 from Prunus mume (Japanese apricot).